An 80-amino-acid chain; its full sequence is Large ribosomal subunit protein bL31 (80 aa).

This sequence belongs to the bacterial ribosomal protein bL31 family. Type A subfamily. Part of the 50S ribosomal subunit.

In terms of biological role, binds the 23S rRNA. In Nostoc punctiforme (strain ATCC 29133 / PCC 73102), this protein is Large ribosomal subunit protein bL31.